The primary structure comprises 102 residues: NADH-quinone oxidoreductase subunit K 2 (102 aa).

The next 3 helical transmembrane spans lie at 4-24 (ITPV…TVGV), 30-50 (IVII…NLIA), and 62-82 (IFAI…LGIL).

It belongs to the complex I subunit 4L family. NDH-1 is composed of 14 different subunits. Subunits NuoA, H, J, K, L, M, N constitute the membrane sector of the complex.

The protein resides in the cell inner membrane. The catalysed reaction is a quinone + NADH + 5 H(+)(in) = a quinol + NAD(+) + 4 H(+)(out). In terms of biological role, NDH-1 shuttles electrons from NADH, via FMN and iron-sulfur (Fe-S) centers, to quinones in the respiratory chain. The immediate electron acceptor for the enzyme in this species is believed to be ubiquinone. Couples the redox reaction to proton translocation (for every two electrons transferred, four hydrogen ions are translocated across the cytoplasmic membrane), and thus conserves the redox energy in a proton gradient. The sequence is that of NADH-quinone oxidoreductase subunit K 2 from Solibacter usitatus (strain Ellin6076).